Here is a 417-residue protein sequence, read N- to C-terminus: UDP-N-acetylglucosamine 1-carboxyvinyltransferase (417 aa).

Phosphoenolpyruvate is bound at residue 22 to 23 (KN). A UDP-N-acetyl-alpha-D-glucosamine-binding site is contributed by arginine 92. The active-site Proton donor is the cysteine 116. Cysteine 116 is modified (2-(S-cysteinyl)pyruvic acid O-phosphothioketal). UDP-N-acetyl-alpha-D-glucosamine-binding residues include aspartate 304 and valine 326.

This sequence belongs to the EPSP synthase family. MurA subfamily.

It is found in the cytoplasm. The catalysed reaction is phosphoenolpyruvate + UDP-N-acetyl-alpha-D-glucosamine = UDP-N-acetyl-3-O-(1-carboxyvinyl)-alpha-D-glucosamine + phosphate. The protein operates within cell wall biogenesis; peptidoglycan biosynthesis. In terms of biological role, cell wall formation. Adds enolpyruvyl to UDP-N-acetylglucosamine. The sequence is that of UDP-N-acetylglucosamine 1-carboxyvinyltransferase from Syntrophotalea carbinolica (strain DSM 2380 / NBRC 103641 / GraBd1) (Pelobacter carbinolicus).